The sequence spans 210 residues: dTTP/UTP pyrophosphatase (210 aa).

The Proton acceptor role is filled by D89.

Belongs to the Maf family. YhdE subfamily. It depends on a divalent metal cation as a cofactor.

The protein localises to the cytoplasm. The catalysed reaction is dTTP + H2O = dTMP + diphosphate + H(+). The enzyme catalyses UTP + H2O = UMP + diphosphate + H(+). Functionally, nucleoside triphosphate pyrophosphatase that hydrolyzes dTTP and UTP. May have a dual role in cell division arrest and in preventing the incorporation of modified nucleotides into cellular nucleic acids. This Burkholderia orbicola (strain AU 1054) protein is dTTP/UTP pyrophosphatase.